The sequence spans 272 residues: uncharacterized protein (272 aa).

This is an uncharacterized protein from Bacillus anthracis.